Here is a 226-residue protein sequence, read N- to C-terminus: Uracil-DNA glycosylase (226 aa).

Aspartate 64 serves as the catalytic Proton acceptor.

It belongs to the uracil-DNA glycosylase (UDG) superfamily. UNG family.

It localises to the cytoplasm. The enzyme catalyses Hydrolyzes single-stranded DNA or mismatched double-stranded DNA and polynucleotides, releasing free uracil.. Excises uracil residues from the DNA which can arise as a result of misincorporation of dUMP residues by DNA polymerase or due to deamination of cytosine. The sequence is that of Uracil-DNA glycosylase from Vibrio parahaemolyticus serotype O3:K6 (strain RIMD 2210633).